The chain runs to 181 residues: Adenine phosphoribosyltransferase (181 aa).

The protein belongs to the purine/pyrimidine phosphoribosyltransferase family. Homodimer.

It localises to the cytoplasm. It carries out the reaction AMP + diphosphate = 5-phospho-alpha-D-ribose 1-diphosphate + adenine. It functions in the pathway purine metabolism; AMP biosynthesis via salvage pathway; AMP from adenine: step 1/1. In terms of biological role, catalyzes a salvage reaction resulting in the formation of AMP, that is energically less costly than de novo synthesis. This Methylorubrum extorquens (strain CM4 / NCIMB 13688) (Methylobacterium extorquens) protein is Adenine phosphoribosyltransferase.